The following is a 63-amino-acid chain: ATP synthase membrane subunit K, mitochondrial (63 aa).

A helical membrane pass occupies residues 15–37; sequence TMRGRANVAKATWASLGLVYVLV.

As to quaternary structure, F-type ATPases have 2 components, CF(1) - the catalytic core - and CF(0) - the membrane proton channel. CF(1) has five subunits: alpha(3), beta(3), gamma(1), delta(1), epsilon(1). CF(0) has three main subunits: a, b and c. The ATP synthase complex/complex V exists as a monomeric and a dimeric supercomplex that helps shape mitochondrial cristae to optimize proton flow.

The protein resides in the mitochondrion membrane. Mitochondrial membrane ATP synthase (F(1)F(0) ATP synthase or Complex V) produces ATP from ADP in the presence of a proton gradient across the membrane which is generated by electron transport complexes of the respiratory chain. F-type ATPases consist of two structural domains, F(1) - containing the extramembraneous catalytic core and F(0) - containing the membrane proton channel, linked together by a central stalk and a peripheral stalk. During catalysis, ATP synthesis in the catalytic domain of F(1) is coupled via a rotary mechanism of the central stalk subunits to proton translocation. ATP5MK is a minor subunit of the mitochondrial membrane ATP synthase required for dimerization of the ATP synthase complex and as such regulates ATP synthesis in the mitochondria. The protein is ATP synthase membrane subunit K, mitochondrial of Drosophila melanogaster (Fruit fly).